A 471-amino-acid polypeptide reads, in one-letter code: Protoheme IX farnesyltransferase, mitochondrial (471 aa).

A mitochondrion-targeting transit peptide spans Met1 to Ile60. Transmembrane regions (helical) follow at residues Ala188 to Ala208, Ile247 to Leu267, Ile287 to Ala307, Leu312 to Phe332, Leu368 to Val388, and Lys430 to Lys450.

Belongs to the UbiA prenyltransferase family.

The protein localises to the mitochondrion membrane. The enzyme catalyses heme b + (2E,6E)-farnesyl diphosphate + H2O = Fe(II)-heme o + diphosphate. Its function is as follows. Converts protoheme IX and farnesyl diphosphate to heme O. The protein is Protoheme IX farnesyltransferase, mitochondrial (COX10) of Yarrowia lipolytica (strain CLIB 122 / E 150) (Yeast).